The following is a 160-amino-acid chain: 6,7-dimethyl-8-ribityllumazine synthase (160 aa).

Residues phenylalanine 28, 62-64 (ALE), and 86-88 (AVI) each bind 5-amino-6-(D-ribitylamino)uracil. Position 91-92 (91-92 (ET)) interacts with (2S)-2-hydroxy-3-oxobutyl phosphate. Catalysis depends on histidine 94, which acts as the Proton donor. Asparagine 119 provides a ligand contact to 5-amino-6-(D-ribitylamino)uracil. Arginine 133 contributes to the (2S)-2-hydroxy-3-oxobutyl phosphate binding site.

The protein belongs to the DMRL synthase family.

It carries out the reaction (2S)-2-hydroxy-3-oxobutyl phosphate + 5-amino-6-(D-ribitylamino)uracil = 6,7-dimethyl-8-(1-D-ribityl)lumazine + phosphate + 2 H2O + H(+). The protein operates within cofactor biosynthesis; riboflavin biosynthesis; riboflavin from 2-hydroxy-3-oxobutyl phosphate and 5-amino-6-(D-ribitylamino)uracil: step 1/2. Catalyzes the formation of 6,7-dimethyl-8-ribityllumazine by condensation of 5-amino-6-(D-ribitylamino)uracil with 3,4-dihydroxy-2-butanone 4-phosphate. This is the penultimate step in the biosynthesis of riboflavin. The polypeptide is 6,7-dimethyl-8-ribityllumazine synthase (Nitrosospira multiformis (strain ATCC 25196 / NCIMB 11849 / C 71)).